Reading from the N-terminus, the 336-residue chain is Cytoskeleton protein RodZ (336 aa).

The Cytoplasmic segment spans residues 1–111 (MNTEATHDQN…LGKRRKKRDG (111 aa)). An HTH cro/C1-type domain is found at 19–71 (LRNAREQLGLSQQAVAERLCLKVSTVRDIEEDKAPSDLASTFLRGYIRSYARL). The H-T-H motif DNA-binding region spans 30 to 49 (QQAVAERLCLKVSTVRDIEE). A helical; Signal-anchor for type II membrane protein transmembrane segment spans residues 112–132 (WLMSFTWLVLFVVVGLTGAWW). Residues 133 to 336 (WQNHKAQQEE…TLNAEPTPAQ (204 aa)) are Periplasmic-facing. The tract at residues 155 to 243 (NADKDSGQSV…PSALPTSQAG (89 aa)) is disordered. The segment covering 161 to 175 (GQSVPLDTGAVTSQD) has biased composition (polar residues). Low complexity-rich tracts occupy residues 176–214 (TTPA…VVAP) and 221–243 (TAAT…SQAG).

Belongs to the RodZ family.

Its subcellular location is the cell inner membrane. Its function is as follows. Cytoskeletal protein that is involved in cell-shape control through regulation of the length of the long axis. The protein is Cytoskeleton protein RodZ of Salmonella newport (strain SL254).